A 380-amino-acid polypeptide reads, in one-letter code: Cytochrome b (380 aa).

The next 4 helical transmembrane spans lie at 34–54 (FGSL…LLAM), 78–99 (WLIR…YLHI), 114–134 (WNIG…GYVL), and 179–199 (FFAL…VHLT). 2 residues coordinate heme b: His84 and His98. Heme b contacts are provided by His183 and His197. Residue His202 coordinates a ubiquinone. 4 helical membrane-spanning segments follow: residues 227 to 247 (IKDM…ALFS), 289 to 309 (LGGV…PLLH), 321 to 341 (LLPF…WVGS), and 348 to 368 (FIII…VLFP).

The protein belongs to the cytochrome b family. As to quaternary structure, the cytochrome bc1 complex contains 11 subunits: 3 respiratory subunits (MT-CYB, CYC1 and UQCRFS1), 2 core proteins (UQCRC1 and UQCRC2) and 6 low-molecular weight proteins (UQCRH/QCR6, UQCRB/QCR7, UQCRQ/QCR8, UQCR10/QCR9, UQCR11/QCR10 and a cleavage product of UQCRFS1). This cytochrome bc1 complex then forms a dimer. The cofactor is heme b.

The protein localises to the mitochondrion inner membrane. In terms of biological role, component of the ubiquinol-cytochrome c reductase complex (complex III or cytochrome b-c1 complex) that is part of the mitochondrial respiratory chain. The b-c1 complex mediates electron transfer from ubiquinol to cytochrome c. Contributes to the generation of a proton gradient across the mitochondrial membrane that is then used for ATP synthesis. In Gymnorhina tibicen (Australian magpie), this protein is Cytochrome b (MT-CYB).